The sequence spans 83 residues: Gas vesicle protein G1 (83 aa).

The protein belongs to the gas vesicle GvpG family. GvpF to GvpM interact with each other in vitro, and may form multi-subunit complex(es). Might interact with GvpA1.

The protein localises to the gas vesicle. In terms of biological role, proteins GvpF to GvpM might be involved in nucleating gas vesicle formation. A minor component of the gas vesicle. Gas vesicles are hollow, gas filled proteinaceous nanostructures found in several microbial planktonic microorganisms. They allow positioning of halobacteria at the optimal depth for growth in the poorly aerated, shallow brine pools of their habitat. Expression of a 9.5 kb p-vac DNA fragment containing 2 divergently transcribed regions (gvpD-gvpE-gvpF-gvpG-gvpH-gvpI-gvpJ-gvpK-gvpL-gvpM and gvpA-gvpC-gvpN-gvpO) allows H.volcanii to produce gas vesicles. A minimal gas vesicle can be made in H.volcanii by gvpA1-gvpO1 plus gvpF1-gvpG1-gvpJ1-gvpK1-gvpL1-gvpM1; lack of enough GvpJ1 prevents formation. A similar region restores gas vesicle production in H.halobium without the p-vac locus, but it still has the c-vac locus. This Halobacterium salinarum (strain ATCC 700922 / JCM 11081 / NRC-1) (Halobacterium halobium) protein is Gas vesicle protein G1 (gvpG11).